The primary structure comprises 236 residues: 2-C-methyl-D-erythritol 4-phosphate cytidylyltransferase (236 aa).

Belongs to the IspD/TarI cytidylyltransferase family. IspD subfamily.

It carries out the reaction 2-C-methyl-D-erythritol 4-phosphate + CTP + H(+) = 4-CDP-2-C-methyl-D-erythritol + diphosphate. Its pathway is isoprenoid biosynthesis; isopentenyl diphosphate biosynthesis via DXP pathway; isopentenyl diphosphate from 1-deoxy-D-xylulose 5-phosphate: step 2/6. Catalyzes the formation of 4-diphosphocytidyl-2-C-methyl-D-erythritol from CTP and 2-C-methyl-D-erythritol 4-phosphate (MEP). In Symbiobacterium thermophilum (strain DSM 24528 / JCM 14929 / IAM 14863 / T), this protein is 2-C-methyl-D-erythritol 4-phosphate cytidylyltransferase.